The sequence spans 462 residues: Acetyl-CoA decarbonylase/synthase complex subunit gamma (462 aa).

Residues 1 to 60 (MAQLSAMDVYNLLPKANCGACGCKTCMEFATKLVNREAKPEDCPKLDDESLEKLQELLAP) form the 4Fe-4S domain. The [4Fe-4S] cluster site is built by Cys18, Cys21, Cys26, and Cys43.

Heterodimer of delta and gamma chains. The ACDS complex is made up of alpha, epsilon, beta, gamma and delta chains with a probable stoichiometry of (alpha(2)epsilon(2))(4)-beta(8)-(gamma(1)delta(1))(8). Requires corrinoid as cofactor. [4Fe-4S] cluster serves as cofactor.

The enzyme catalyses 5,6,7,8-tetrahydrosarcinapterin + methyl-Co(III)-[corrinoid Fe-S protein] = 5-methyltetrahydrosarcinapterin + Co(I)-[corrinoid Fe-S protein] + H(+). Part of a complex that catalyzes the reversible cleavage of acetyl-CoA, allowing autotrophic growth from CO(2). The protein is Acetyl-CoA decarbonylase/synthase complex subunit gamma of Methanopyrus kandleri (strain AV19 / DSM 6324 / JCM 9639 / NBRC 100938).